The chain runs to 548 residues: Adenine deaminase (548 aa).

Belongs to the metallo-dependent hydrolases superfamily. Adenine deaminase family. Requires Mn(2+) as cofactor.

It carries out the reaction adenine + H2O + H(+) = hypoxanthine + NH4(+). The chain is Adenine deaminase from Borreliella burgdorferi (strain ATCC 35210 / DSM 4680 / CIP 102532 / B31) (Borrelia burgdorferi).